A 570-amino-acid chain; its full sequence is MAFGARGWRRWSLLLLLLWVTGQAAPVLGLAVSSELQIQRSFVPDECPRTVRSGDFVRYHYVGTFLDGQKFDSSYDRDSTFSVFVGKGQLIAGMDQALVGMCVNERRFVTIPPNLAYGSEGVSGVIPPNSVLHFDVLLVDIWNSEDQVQIQTYFKPPSCPRTIQVSDFVRYHYNGTFLDGTLFDSSHNRMKTYDTYVGIGWLIPGMDKGLLGMCVGEKRIITIPPFLAYGEEGDGKDIPGQASLVFDVALLDLHNPKDTISVENKVVPESCERRSQSGDFLRYHYNGTLLDGTLFDSSYSRNHTFDTYIGQGYVIPGMDEGLLGVCIGERRRIVVPPHLGYGEEGRGSIPGSAVLVFDIHVIDFHNPSDSISITSHYKPPDCSVLSKKGDYLKYHYNASLLDGTLLDSTWNLGKTYNIVLGFGQVVLGMDMGLREMCVGEKRTVIIPPHLGYGEAGVDGEVPGSAVLVFDIELLELVSGLPEGYMFIWNGEVSPNLFEEIDKDGNGEVLLEEFSEYIHAQVASGKGKLAPGFNAEMIVKNMFTNQDRNGDGKVTAEEFKLKDQETKHDEL.

Positions 1–24 (MAFGARGWRRWSLLLLLLWVTGQA) are cleaved as a signal peptide. 4 consecutive PPIase FKBP-type domains span residues 54–142 (GDFV…VDIW), 166–254 (SDFV…LDLH), 278–365 (GDFL…IDFH), and 389–477 (GDYL…LELV). N-linked (GlcNAc...) asparagine glycosylation is found at Asn174, Asn286, Asn302, and Asn397. 2 consecutive EF-hand domains span residues 488 to 523 (WNGE…QVAS) and 533 to 568 (NAEM…TKHD). Residues Asp501, Asp503, Asn505, Glu507, Glu512, Asp546, Asn548, Asp550, Lys552, and Glu557 each coordinate Ca(2+). The short motif at 567–570 (HDEL) is the Prevents secretion from ER element.

Post-translationally, phosphorylated.

It is found in the endoplasmic reticulum lumen. It carries out the reaction [protein]-peptidylproline (omega=180) = [protein]-peptidylproline (omega=0). With respect to regulation, inhibited by FK506. PPIases accelerate the folding of proteins during protein synthesis. This chain is Peptidyl-prolyl cis-trans isomerase FKBP9 (Fkbp9), found in Rattus norvegicus (Rat).